The following is a 39-amino-acid chain: Large ribosomal subunit protein bL36 (39 aa).

Belongs to the bacterial ribosomal protein bL36 family.

This Leuconostoc mesenteroides subsp. mesenteroides (strain ATCC 8293 / DSM 20343 / BCRC 11652 / CCM 1803 / JCM 6124 / NCDO 523 / NBRC 100496 / NCIMB 8023 / NCTC 12954 / NRRL B-1118 / 37Y) protein is Large ribosomal subunit protein bL36.